The following is a 214-amino-acid chain: MIFITGTDTGIGKTYVSSILAENLKKMGINVGYLKPVETGGREDTLTLKNILNTDDDLDLMNPINLKLPLSPNIAFDVENSPLTLDEIKEKIKNAYETLKEKYDFLIVEGAGGVCVPIKEDFLMSDLIKFLGLDAVVVSRPNLGTINHTLLTVEHLRNKGINVRGVIINCITDLSEVLYYEKTFETIEKVGNIEIIGIVKSREDFEIDFEKILR.

Gly-10 to Tyr-15 contacts ATP. Thr-14 provides a ligand contact to Mg(2+). Lys-35 is a catalytic residue. A substrate-binding site is contributed by Thr-39. ATP-binding positions include Asp-44, Glu-109–Gly-112, and Asn-169–Cys-170. Asp-44 and Glu-109 together coordinate Mg(2+).

This sequence belongs to the dethiobiotin synthetase family. In terms of assembly, homodimer. It depends on Mg(2+) as a cofactor.

It localises to the cytoplasm. It catalyses the reaction (7R,8S)-7,8-diammoniononanoate + CO2 + ATP = (4R,5S)-dethiobiotin + ADP + phosphate + 3 H(+). Its pathway is cofactor biosynthesis; biotin biosynthesis; biotin from 7,8-diaminononanoate: step 1/2. In terms of biological role, catalyzes a mechanistically unusual reaction, the ATP-dependent insertion of CO2 between the N7 and N8 nitrogen atoms of 7,8-diaminopelargonic acid (DAPA, also called 7,8-diammoniononanoate) to form a ureido ring. This Methanocaldococcus jannaschii (strain ATCC 43067 / DSM 2661 / JAL-1 / JCM 10045 / NBRC 100440) (Methanococcus jannaschii) protein is ATP-dependent dethiobiotin synthetase BioD.